Consider the following 257-residue polypeptide: UPF0246 protein KPK_4750 (257 aa).

The protein belongs to the UPF0246 family.

This chain is UPF0246 protein KPK_4750, found in Klebsiella pneumoniae (strain 342).